Reading from the N-terminus, the 312-residue chain is DNA-directed RNA polymerase subunit alpha (312 aa).

The segment at 1-226 is alpha N-terminal domain (alpha-NTD); it reads MIEFKKPNIT…EHFKAFESAD (226 aa). Residues 243-312 form an alpha C-terminal domain (alpha-CTD) region; sequence KEKKLEMTIE…DLGLSLRQED (70 aa).

This sequence belongs to the RNA polymerase alpha chain family. As to quaternary structure, homodimer. The RNAP catalytic core consists of 2 alpha, 1 beta, 1 beta' and 1 omega subunit. When a sigma factor is associated with the core the holoenzyme is formed, which can initiate transcription.

The catalysed reaction is RNA(n) + a ribonucleoside 5'-triphosphate = RNA(n+1) + diphosphate. Its function is as follows. DNA-dependent RNA polymerase catalyzes the transcription of DNA into RNA using the four ribonucleoside triphosphates as substrates. The chain is DNA-directed RNA polymerase subunit alpha from Lactobacillus delbrueckii subsp. bulgaricus (strain ATCC BAA-365 / Lb-18).